Consider the following 483-residue polypeptide: Glutamyl-tRNA(Gln) amidotransferase subunit A (483 aa).

Active-site charge relay system residues include Lys77 and Ser152. Ser176 serves as the catalytic Acyl-ester intermediate.

It belongs to the amidase family. GatA subfamily. In terms of assembly, heterotrimer of A, B and C subunits.

It catalyses the reaction L-glutamyl-tRNA(Gln) + L-glutamine + ATP + H2O = L-glutaminyl-tRNA(Gln) + L-glutamate + ADP + phosphate + H(+). Functionally, allows the formation of correctly charged Gln-tRNA(Gln) through the transamidation of misacylated Glu-tRNA(Gln) in organisms which lack glutaminyl-tRNA synthetase. The reaction takes place in the presence of glutamine and ATP through an activated gamma-phospho-Glu-tRNA(Gln). This Listeria welshimeri serovar 6b (strain ATCC 35897 / DSM 20650 / CCUG 15529 / CIP 8149 / NCTC 11857 / SLCC 5334 / V8) protein is Glutamyl-tRNA(Gln) amidotransferase subunit A.